A 462-amino-acid chain; its full sequence is Argininosuccinate lyase (462 aa).

The protein belongs to the lyase 1 family. Argininosuccinate lyase subfamily.

It is found in the cytoplasm. The catalysed reaction is 2-(N(omega)-L-arginino)succinate = fumarate + L-arginine. It functions in the pathway amino-acid biosynthesis; L-arginine biosynthesis; L-arginine from L-ornithine and carbamoyl phosphate: step 3/3. The chain is Argininosuccinate lyase from Bacillus mycoides (strain KBAB4) (Bacillus weihenstephanensis).